A 207-amino-acid polypeptide reads, in one-letter code: Uridine kinase (207 aa).

14-21 serves as a coordination point for ATP; the sequence is GGSGSGKT.

This sequence belongs to the uridine kinase family.

It is found in the cytoplasm. The enzyme catalyses uridine + ATP = UMP + ADP + H(+). The catalysed reaction is cytidine + ATP = CMP + ADP + H(+). It participates in pyrimidine metabolism; CTP biosynthesis via salvage pathway; CTP from cytidine: step 1/3. The protein operates within pyrimidine metabolism; UMP biosynthesis via salvage pathway; UMP from uridine: step 1/1. The protein is Uridine kinase of Deinococcus deserti (strain DSM 17065 / CIP 109153 / LMG 22923 / VCD115).